A 389-amino-acid polypeptide reads, in one-letter code: Chalcone synthase 9 (389 aa).

Cysteine 164 is a catalytic residue.

It belongs to the thiolase-like superfamily. Chalcone/stilbene synthases family.

It catalyses the reaction (E)-4-coumaroyl-CoA + 3 malonyl-CoA + 3 H(+) = 2',4,4',6'-tetrahydroxychalcone + 3 CO2 + 4 CoA. It participates in secondary metabolite biosynthesis; flavonoid biosynthesis. Functionally, the primary product of this enzyme is 4,2',4',6'-tetrahydroxychalcone (also termed naringenin-chalcone or chalcone) which can under specific conditions spontaneously isomerize into naringenin. The polypeptide is Chalcone synthase 9 (CHS9) (Medicago sativa (Alfalfa)).